The chain runs to 138 residues: Protein PsiE homolog (138 aa).

A run of 4 helical transmembrane segments spans residues 12–34, 56–76, 84–104, and 109–129; these read YLLQALLNVCLFFLALALSALLI, YEMLGELLIFFMYFEFIALII, HFPLRYFIYIGITAVIRLIII, and AISTFWWAMAILAMICGFFIA.

This sequence belongs to the PsiE family.

The protein resides in the cell membrane. The polypeptide is Protein PsiE homolog (Bacillus subtilis (strain 168)).